We begin with the raw amino-acid sequence, 428 residues long: Enolase (428 aa).

Q162 provides a ligand contact to (2R)-2-phosphoglycerate. E204 functions as the Proton donor in the catalytic mechanism. Mg(2+)-binding residues include D241, E283, and D310. (2R)-2-phosphoglycerate is bound by residues K335, R364, S365, and K386. The active-site Proton acceptor is the K335.

It belongs to the enolase family. Mg(2+) serves as cofactor.

Its subcellular location is the cytoplasm. It localises to the secreted. It is found in the cell surface. It carries out the reaction (2R)-2-phosphoglycerate = phosphoenolpyruvate + H2O. The protein operates within carbohydrate degradation; glycolysis; pyruvate from D-glyceraldehyde 3-phosphate: step 4/5. In terms of biological role, catalyzes the reversible conversion of 2-phosphoglycerate (2-PG) into phosphoenolpyruvate (PEP). It is essential for the degradation of carbohydrates via glycolysis. In Nocardia farcinica (strain IFM 10152), this protein is Enolase.